The following is a 179-amino-acid chain: Shikimate kinase (179 aa).

Position 15 to 20 (15 to 20 (GAGKTS)) interacts with ATP. Residue T19 participates in Mg(2+) binding. Substrate contacts are provided by D37, R61, and G83. Residue R122 participates in ATP binding. Substrate is bound at residue R142.

The protein belongs to the shikimate kinase family. In terms of assembly, monomer. Mg(2+) serves as cofactor.

The protein localises to the cytoplasm. It catalyses the reaction shikimate + ATP = 3-phosphoshikimate + ADP + H(+). It functions in the pathway metabolic intermediate biosynthesis; chorismate biosynthesis; chorismate from D-erythrose 4-phosphate and phosphoenolpyruvate: step 5/7. Functionally, catalyzes the specific phosphorylation of the 3-hydroxyl group of shikimic acid using ATP as a cosubstrate. This is Shikimate kinase from Coxiella burnetii (strain Dugway 5J108-111).